The chain runs to 91 residues: Small ribosomal subunit protein uS19 (91 aa).

Belongs to the universal ribosomal protein uS19 family.

Its function is as follows. Protein S19 forms a complex with S13 that binds strongly to the 16S ribosomal RNA. The sequence is that of Small ribosomal subunit protein uS19 from Acinetobacter baumannii (strain AB307-0294).